Reading from the N-terminus, the 852-residue chain is GPI ethanolamine phosphate transferase 2 (852 aa).

Asn-191 and Asn-420 each carry an N-linked (GlcNAc...) asparagine glycan. 3 helical membrane passes run 458-478 (LIRL…TFFP), 486-506 (FAPA…MMFA), and 516-536 (FWYW…AGHF). An N-linked (GlcNAc...) asparagine glycan is attached at Asn-576. A run of 6 helical transmembrane segments spans residues 632–652 (LLYH…YSLY), 676–696 (TLTL…FLVF), 714–734 (TITS…SNAI), 750–770 (SVFI…IWWV), 787–807 (AHVT…MAAC), and 824–844 (YLYT…LGEI).

It belongs to the PIGG/PIGN/PIGO family. PIGG subfamily.

Its subcellular location is the endoplasmic reticulum membrane. It participates in glycolipid biosynthesis; glycosylphosphatidylinositol-anchor biosynthesis. In terms of biological role, ethanolamine phosphate transferase involved in glycosylphosphatidylinositol-anchor biosynthesis. Transfers ethanolamine phosphate to the GPI second mannose. The polypeptide is GPI ethanolamine phosphate transferase 2 (las21) (Aspergillus oryzae (strain ATCC 42149 / RIB 40) (Yellow koji mold)).